The following is a 302-amino-acid chain: Nitrophorin Cim l NP (302 aa).

Positions 1-20 (MKLLLSAGAALAFVLGLCAA) are cleaved as a signal peptide. Cys-80 is a binding site for heme.

It depends on heme b as a cofactor. Post-translationally, the N-terminus is blocked. As to expression, expressed in salivary glands.

The protein resides in the secreted. Functionally, heme-based protein that delivers nitric oxide gas (NO) to the victim while feeding, resulting in vasodilation. In place of heme, the heme-binding cysteine can also reversibly bind NO when it is present in high concentrations. This chain is Nitrophorin Cim l NP, found in Cimex lectularius (Bed bug).